The chain runs to 82 residues: Apovitellenin-1 (82 aa).

It belongs to the apovitellenin family. Monomer. Found in egg yolk and in plasma.

Functionally, protein component of the very low density lipoprotein (VLDL) of egg-laying females. Potent lipoprotein lipase inhibitor, preventing the loss of triglycerides from VLDL on their way from the liver to the growing oocytes. The chain is Apovitellenin-1 from Meleagris gallopavo (Wild turkey).